Here is a 314-residue protein sequence, read N- to C-terminus: MIEIEKPKIETIEISDDAKYGKFVVEPLERGYGTTLGNSLRRILLSSLPGAAVTSIQIDGALHEFSVIEGVVEDVTTMILNIKKLALKIYSDEEKTLEIDMQGPGVVTAADINYDSDVEILNPDLHIATLSDNAKFHVRLNATRGRGYTPADQNKRENMPIGVLPVDSIFSPVIRVNYQVENTRVGQSTNYDKLTFDVLTDGSISPEEAVSLGAKILSEHLSIFVNLTDEAQKAEIMIEKEESHKEKVLEMTIEELDLSVRSYNCLKRAGINTVQELADKSEDDMMKVRNLGRKSLEEVKVKLADLGLSLRNEN.

Residues 1–228 (MIEIEKPKIE…EHLSIFVNLT (228 aa)) form an alpha N-terminal domain (alpha-NTD) region. The interval 245–314 (KEKVLEMTIE…DLGLSLRNEN (70 aa)) is alpha C-terminal domain (alpha-CTD).

It belongs to the RNA polymerase alpha chain family. In terms of assembly, homodimer. The RNAP catalytic core consists of 2 alpha, 1 beta, 1 beta' and 1 omega subunit. When a sigma factor is associated with the core the holoenzyme is formed, which can initiate transcription.

The catalysed reaction is RNA(n) + a ribonucleoside 5'-triphosphate = RNA(n+1) + diphosphate. Its function is as follows. DNA-dependent RNA polymerase catalyzes the transcription of DNA into RNA using the four ribonucleoside triphosphates as substrates. This chain is DNA-directed RNA polymerase subunit alpha, found in Listeria innocua serovar 6a (strain ATCC BAA-680 / CLIP 11262).